Consider the following 112-residue polypeptide: Putative pterin-4-alpha-carbinolamine dehydratase (112 aa).

Belongs to the pterin-4-alpha-carbinolamine dehydratase family.

It catalyses the reaction (4aS,6R)-4a-hydroxy-L-erythro-5,6,7,8-tetrahydrobiopterin = (6R)-L-erythro-6,7-dihydrobiopterin + H2O. This chain is Putative pterin-4-alpha-carbinolamine dehydratase, found in Shewanella oneidensis (strain ATCC 700550 / JCM 31522 / CIP 106686 / LMG 19005 / NCIMB 14063 / MR-1).